A 295-amino-acid polypeptide reads, in one-letter code: Small ribosomal subunit protein uS2 (295 aa).

At S2 the chain carries N-acetylserine. The residue at position 43 (S43) is a Phosphoserine. The residue at position 52 (K52) is an N6-acetyllysine. The interaction with PPP1R16B stretch occupies residues 54 to 113; sequence TWEKLLLAARAIVAIENPADVSVISSRNTGQRAVLKFAAATGATPIAGRFTPGTFTNQIQ. K89 bears the N6-acetyllysine; alternate mark. Residue K89 forms a Glycyl lysine isopeptide (Lys-Gly) (interchain with G-Cter in SUMO2); alternate linkage. T97 is subject to Phosphothreonine. 2 laminin-binding regions span residues 161–180 and 205–229; these read IPCNNKGAHSVGLMWWMLAR and RDPEEIEKEEQAAAEKAVTKEEFQG. [DE]-W-[ST] repeat units follow at residues 230–232, 247–249, 266–268, 275–277, and 293–295; these read EWT, DWS, and EWS. Residues 242–295 form a laminin-binding region; the sequence is QPEVADWSEGVQVPSVPIQQFPTEDWSAQPATEDWSAAPTAQATEWVGATTEWS. The tract at residues 266 to 295 is disordered; the sequence is DWSAQPATEDWSAAPTAQATEWVGATTEWS.

The protein belongs to the universal ribosomal protein uS2 family. As to quaternary structure, monomer (37LRP) and homodimer (67LR). Component of the small ribosomal subunit. Mature ribosomes consist of a small (40S) and a large (60S) subunit. The 40S subunit contains about 33 different proteins and 1 molecule of RNA (18S). The 60S subunit contains about 49 different proteins and 3 molecules of RNA (28S, 5.8S and 5S). Interacts with RPS21. Interacts with several laminins including at least LAMB1. Interacts with MDK. The mature dimeric form interacts with PPP1R16B (via its fourth ankyrin repeat). Interacts with PPP1CA only in the presence of PPP1R16B. Acylated. Acylation may be a prerequisite for conversion of the monomeric 37 kDa laminin receptor precursor (37LRP) to the mature dimeric 67 kDa laminin receptor (67LR), and may provide a mechanism for membrane association. Post-translationally, cleaved by stromelysin-3 (ST3) at the cell surface. Cleavage by stromelysin-3 may be a mechanism to alter cell-extracellular matrix interactions. In terms of tissue distribution, expressed in most neurons and in a subset of glial cells. The overall distribution of LR correlates with that reported for laminin-1 but also with brain regions classically associated with prion-related neurodegeneration.

Its subcellular location is the cell membrane. The protein localises to the cytoplasm. It localises to the nucleus. Required for the assembly and/or stability of the 40S ribosomal subunit. Required for the processing of the 20S rRNA-precursor to mature 18S rRNA in a late step of the maturation of 40S ribosomal subunits. Also functions as a cell surface receptor for laminin. Plays a role in cell adhesion to the basement membrane and in the consequent activation of signaling transduction pathways. May play a role in cell fate determination and tissue morphogenesis. Also acts as a receptor for several other ligands, including the pathogenic prion protein, viruses, and bacteria. Acts as a PPP1R16B-dependent substrate of PPP1CA. This is Small ribosomal subunit protein uS2 (Rpsa) from Rattus norvegicus (Rat).